The primary structure comprises 172 residues: CD164 sialomucin-like 2 protein (172 aa).

The N-terminal stretch at 1 to 29 is a signal peptide; it reads MAAPGPRALRAALCGGCCCLLLCAQLVLA. At 30–137 the chain is on the extracellular side; the sequence is GKGARGFGRG…PEDHSPGFDG (108 aa). 2 N-linked (GlcNAc...) asparagine glycosylation sites follow: N69 and N101. A disordered region spans residues 108-132; sequence ASHHHSTEEPKPSTTGSPPIPEDHS. A helical membrane pass occupies residues 138 to 158; sequence ASFIGGIVLVLSLQATAFFVL. The Cytoplasmic segment spans residues 159–172; the sequence is RFLKAKDSTYQTLI.

The protein belongs to the CD164 family.

Its subcellular location is the membrane. This chain is CD164 sialomucin-like 2 protein (Cd164l2), found in Mus musculus (Mouse).